An 829-amino-acid polypeptide reads, in one-letter code: MTTFVTQDTINAFFDGRHADPFAVLGMHETDNGIEIRALLPDAGRVVVIDKETQDEVCELSRIDERGFFAGIMPQRNSFFNYQLQVSWGNEVLRIEDPYRFHPMIQELDNWLLAEGSHLRPYEVLGAHFMECDHVSGVNFRLWAPNAKRVSVVGDFNYWDGRRHPMRFHQASGVWELFIPKVALGDLYKFELLDNNNRLRLKSDPYAFAAQLRPDTASQISVLPEIQEMTAARRKANQLDQPISIYEVHLGSWRRNLANNFWLNYDEIADELIPYVKEMGFTHIELLPISEFPFDGSWGYQPIGLYAPTSRFGSPEGFKRFVDKAHAAGINVILDWVPGHFPSDTHGLATFDGTALYEHADPKEGYHQDWNTLIYNYGRHEVKNYLSGNALYWVERFGLDGIRVDAVASMIYRDYSRRDGEWIPNQYGGRENLEAIEFLKHTNYILGTEHPGVMCVAEESTAFAGVTLPPENGGLGFNFKWNMGWMNDTLSYMKLDPIYRQYNHSKLTFGMLYQYSENFVLPLSHDEVVHGKCSLLDKMPGDTWQKFANLRAYYGYMWAYPGKKLLFMGNEFAQGREWNYQESLDWYLLDEFHGGGWHSGVQRLVKDLNKTYQKQSALYQLDTKPEGFEWLVVDDAQNSVFVFERRNAKGEPLIVVSNFTPVPRENYRFGVNVAGSYEEILNTDADIYKGSGLNNGGVIDSEEIESHGKTQSISITVPPLATVYFKLKSARKVASPRKVTKKKTTADGAEATAKNASASKATKVSTKKTVKSSEAKPVKAATKSSVTKVATKKSTDKPTAKATRTKKATVTKTAKASAKTTAKKTKDNA.

Asp405 acts as the Nucleophile in catalysis. The Proton donor role is filled by Glu458. The disordered stretch occupies residues Ala758–Ala829. Composition is skewed to low complexity over residues Val778–Val789 and Val810–Thr820.

This sequence belongs to the glycosyl hydrolase 13 family. GlgB subfamily. As to quaternary structure, monomer.

The catalysed reaction is Transfers a segment of a (1-&gt;4)-alpha-D-glucan chain to a primary hydroxy group in a similar glucan chain.. It participates in glycan biosynthesis; glycogen biosynthesis. Functionally, catalyzes the formation of the alpha-1,6-glucosidic linkages in glycogen by scission of a 1,4-alpha-linked oligosaccharide from growing alpha-1,4-glucan chains and the subsequent attachment of the oligosaccharide to the alpha-1,6 position. In Actinobacillus succinogenes (strain ATCC 55618 / DSM 22257 / CCUG 43843 / 130Z), this protein is 1,4-alpha-glucan branching enzyme GlgB.